The primary structure comprises 382 residues: LIM homeobox transcription factor 1-alpha (382 aa).

2 LIM zinc-binding domains span residues 33–92 (SVCE…LFAV) and 92–154 (VKCG…EREL). 2 disordered regions span residues 161 to 208 (AASD…QQRR) and 252 to 285 (KLAR…GMEG). The segment at residues 195 to 254 (PKRPRTILTTQQRRAFKASFEVSSKPCRKVRETLAAETGLSVRVVQVWFQNQRAKMKKLA) is a DNA-binding region (homeobox). A compositionally biased stretch (low complexity) spans 256–269 (RQQQQQQDQQNTQR).

As to expression, isoform 1 is expressed in many tissues. Not found in heart, liver, spleen and testis. Relatively highly expressed in fetal brain. Isoform LMX1A-4AB is expressed in testis.

It is found in the nucleus. In terms of biological role, acts as a transcriptional activator by binding to an A/T-rich sequence, the FLAT element, in the insulin gene promoter. Required for development of the roof plate and, in turn, for specification of dorsal cell fates in the CNS and developing vertebrae. The protein is LIM homeobox transcription factor 1-alpha (LMX1A) of Homo sapiens (Human).